A 1756-amino-acid chain; its full sequence is Transposon Ty1-PR2 Gag-Pol polyprotein (1756 aa).

3 stretches are compositionally biased toward polar residues: residues 1–10 (MESQQLSNYP), 48–60 (TKAN…TPAS), and 127–152 (QSQF…GNTF). 3 disordered regions span residues 1–93 (MESQ…MMTQ), 126–173 (PQSQ…RPPP), and 352–421 (GSRN…SKST). The span at 153-165 (TDSSSADSDMTST) shows a compositional bias: low complexity. Residues 299-401 (NNGIHINNKV…NSKSKTARAH (103 aa)) form an RNA-binding region. Residues 402 to 418 (NVSTSNNSPSTDNDSIS) are compositionally biased toward low complexity. Catalysis depends on aspartate 461, which acts as the For protease activity; shared with dimeric partner. An integrase-type zinc finger-like region spans residues 583 to 640 (NVHTSESTRKYPYPFIHRMLAHANAQTIRYSLKNNTITYFNESDVDWSSAIDYQCPDC). An Integrase catalytic domain is found at 660-836 (NSYEPFQYLH…AGLDISTLLP (177 aa)). Mg(2+) contacts are provided by aspartate 671 and aspartate 736. Disordered regions lie at residues 957–1088 (SKAV…ETEK), 1093–1112 (RSPS…NIVP), and 1131–1188 (DLPL…DNET). Over residues 961–970 (SPTDSTPPST) the composition is skewed to low complexity. Positions 1006–1016 (STPQISNIEST) are enriched in polar residues. The segment covering 1039 to 1054 (ESSHASKSKDFRHSDS) has biased composition (basic and acidic residues). Polar residues-rich tracts occupy residues 1055–1083 (YSEN…QISD) and 1102–1112 (PENNSSHNIVP). A Bipartite nuclear localization signal motif is present at residues 1179–1213 (KKRSLEDNETEIKVSRDTWNTKNMRSLEPPRSKKR). Positions 1339-1477 (NNYYITQLDI…DILGLEIKYQ (139 aa)) constitute a Reverse transcriptase Ty1/copia-type domain. Residues aspartate 1347, aspartate 1428, aspartate 1429, aspartate 1611, glutamate 1653, and aspartate 1686 each coordinate Mg(2+). Positions 1611–1753 (DASYGNQPYY…IKTFKLLTNK (143 aa)) constitute an RNase H Ty1/copia-type domain.

In terms of assembly, the capsid protein forms a homotrimer, from which the VLPs are assembled. The protease is a homodimer, whose active site consists of two apposed aspartic acid residues. Initially, virus-like particles (VLPs) are composed of the structural unprocessed proteins Gag and Gag-Pol, and also contain the host initiator methionine tRNA (tRNA(i)-Met) which serves as a primer for minus-strand DNA synthesis, and a dimer of genomic Ty RNA. Processing of the polyproteins occurs within the particle and proceeds by an ordered pathway, called maturation. First, the protease (PR) is released by autocatalytic cleavage of the Gag-Pol polyprotein yielding capsid protein p45 and a Pol-p154 precursor protein. This cleavage is a prerequisite for subsequent processing of Pol-p154 at the remaining sites to release the mature structural and catalytic proteins. Maturation takes place prior to the RT reaction and is required to produce transposition-competent VLPs.

It localises to the cytoplasm. Its subcellular location is the nucleus. It catalyses the reaction DNA(n) + a 2'-deoxyribonucleoside 5'-triphosphate = DNA(n+1) + diphosphate. The catalysed reaction is Endonucleolytic cleavage to 5'-phosphomonoester.. Its function is as follows. Capsid protein (CA) is the structural component of the virus-like particle (VLP), forming the shell that encapsulates the retrotransposons dimeric RNA genome. The particles are assembled from trimer-clustered units and there are holes in the capsid shells that allow for the diffusion of macromolecules. CA also has nucleocapsid-like chaperone activity, promoting primer tRNA(i)-Met annealing to the multipartite primer-binding site (PBS), dimerization of Ty1 RNA and initiation of reverse transcription. Functionally, the aspartyl protease (PR) mediates the proteolytic cleavages of the Gag and Gag-Pol polyproteins after assembly of the VLP. Reverse transcriptase/ribonuclease H (RT) is a multifunctional enzyme that catalyzes the conversion of the retro-elements RNA genome into dsDNA within the VLP. The enzyme displays a DNA polymerase activity that can copy either DNA or RNA templates, and a ribonuclease H (RNase H) activity that cleaves the RNA strand of RNA-DNA heteroduplexes during plus-strand synthesis and hydrolyzes RNA primers. The conversion leads to a linear dsDNA copy of the retrotransposon that includes long terminal repeats (LTRs) at both ends. In terms of biological role, integrase (IN) targets the VLP to the nucleus, where a subparticle preintegration complex (PIC) containing at least integrase and the newly synthesized dsDNA copy of the retrotransposon must transit the nuclear membrane. Once in the nucleus, integrase performs the integration of the dsDNA into the host genome. The protein is Transposon Ty1-PR2 Gag-Pol polyprotein (TY1B-PR2) of Saccharomyces cerevisiae (strain ATCC 204508 / S288c) (Baker's yeast).